Consider the following 66-residue polypeptide: MPKMKTHKMAKRRIKITGTGKVMAFKSGKRHQNTGKSGDEIRGKGKGFVLAKAEWARMKLMLPRGK.

This sequence belongs to the bacterial ribosomal protein bL35 family. In terms of assembly, part of the 50S ribosomal subunit. Contacts proteins L15 and L33.

Functionally, binds the 23S rRNA. This is Large ribosomal subunit protein bL35 (rpmI) from Deinococcus radiodurans (strain ATCC 13939 / DSM 20539 / JCM 16871 / CCUG 27074 / LMG 4051 / NBRC 15346 / NCIMB 9279 / VKM B-1422 / R1).